The sequence spans 119 residues: C-X-C motif chemokine 17 (119 aa).

Residues 1–22 (MKLLASPFLLLLPVMLMSMVFS) form the signal peptide. The interval 75-100 (CPCDHVKGREKKNRHQKHHRKSQRPS) is disordered. 2 disulfides stabilise this stretch: Cys75-Cys103 and Cys77-Cys110. The span at 82–98 (GREKKNRHQKHHRKSQR) shows a compositional bias: basic residues.

Belongs to the intercrine alpha (chemokine CxC) family. Likely to undergo an endoproteolytic process to form a four-cysteine-containing mature peptide with a canonical CXC chemokine scaffold after secretion. Detected in lung, trachea, lung, tongue thyroid, submaxillary gland, epididymis, and uterus tissues and at a lower level in ovary, prostate and in intestinal tissues.

The protein resides in the secreted. In terms of biological role, chemokine that acts as a chemoattractant for monocytes, macrophages and dendritic cells. Plays a role in angiogenesis and possibly in the development of tumors. Acts as an anti-inflammatory in the stomach. May play a role in the innate defense against infections. Activates the C-X-C chemokine receptor GPR35 to induce a rapid and transient rise in the level of intracellular calcium ions. This chain is C-X-C motif chemokine 17 (Cxcl17), found in Mus musculus (Mouse).